Consider the following 151-residue polypeptide: US8.5 protein (151 aa).

The interval 27-107 (SSQPLDPEGP…APSPHPRPPG (81 aa)) is disordered. Residues 80 to 91 (SDERGPPRHDRP) are compositionally biased toward basic and acidic residues.

It localises to the host nucleus. It is found in the host nucleolus. In Human herpesvirus 1 (strain F) (HHV-1), this protein is US8.5 protein (US8.5).